Here is a 72-residue protein sequence, read N- to C-terminus: Translation initiation factor IF-1 (72 aa).

The S1-like domain occupies 1–72 (MPKDDSIEVE…TRGRITYRAK (72 aa)).

It belongs to the IF-1 family. As to quaternary structure, component of the 30S ribosomal translation pre-initiation complex which assembles on the 30S ribosome in the order IF-2 and IF-3, IF-1 and N-formylmethionyl-tRNA(fMet); mRNA recruitment can occur at any time during PIC assembly.

The protein localises to the cytoplasm. Functionally, one of the essential components for the initiation of protein synthesis. Stabilizes the binding of IF-2 and IF-3 on the 30S subunit to which N-formylmethionyl-tRNA(fMet) subsequently binds. Helps modulate mRNA selection, yielding the 30S pre-initiation complex (PIC). Upon addition of the 50S ribosomal subunit IF-1, IF-2 and IF-3 are released leaving the mature 70S translation initiation complex. In Myxococcus xanthus (strain DK1622), this protein is Translation initiation factor IF-1.